We begin with the raw amino-acid sequence, 93 residues long: Pyrimidine/purine nucleoside phosphorylase (93 aa).

Belongs to the nucleoside phosphorylase PpnP family.

It catalyses the reaction a purine D-ribonucleoside + phosphate = a purine nucleobase + alpha-D-ribose 1-phosphate. It carries out the reaction adenosine + phosphate = alpha-D-ribose 1-phosphate + adenine. The enzyme catalyses cytidine + phosphate = cytosine + alpha-D-ribose 1-phosphate. The catalysed reaction is guanosine + phosphate = alpha-D-ribose 1-phosphate + guanine. It catalyses the reaction inosine + phosphate = alpha-D-ribose 1-phosphate + hypoxanthine. It carries out the reaction thymidine + phosphate = 2-deoxy-alpha-D-ribose 1-phosphate + thymine. The enzyme catalyses uridine + phosphate = alpha-D-ribose 1-phosphate + uracil. The catalysed reaction is xanthosine + phosphate = alpha-D-ribose 1-phosphate + xanthine. In terms of biological role, catalyzes the phosphorolysis of diverse nucleosides, yielding D-ribose 1-phosphate and the respective free bases. Can use uridine, adenosine, guanosine, cytidine, thymidine, inosine and xanthosine as substrates. Also catalyzes the reverse reactions. This Pseudoalteromonas atlantica (strain T6c / ATCC BAA-1087) protein is Pyrimidine/purine nucleoside phosphorylase.